A 361-amino-acid chain; its full sequence is GTP 3',8-cyclase (361 aa).

The interval 1–30 (MTVTALGLPTVARSTGDGSAGASPAPADGP) is disordered. The span at 16 to 30 (GDGSAGASPAPADGP) shows a compositional bias: low complexity. Residues 34–252 (TYGRAATDLR…LQQHFELTPD (219 aa)) enclose the Radical SAM core domain. GTP is bound at residue Arg-43. Cys-50 and Cys-54 together coordinate [4Fe-4S] cluster. Tyr-56 lines the S-adenosyl-L-methionine pocket. Residue Cys-57 participates in [4Fe-4S] cluster binding. Arg-94 lines the GTP pocket. Residue Gly-98 participates in S-adenosyl-L-methionine binding. Thr-125 provides a ligand contact to GTP. Position 149 (Ser-149) interacts with S-adenosyl-L-methionine. Lys-186 serves as a coordination point for GTP. Met-220 lines the S-adenosyl-L-methionine pocket. The [4Fe-4S] cluster site is built by Cys-288 and Cys-291. Residue 293 to 295 (RTR) coordinates GTP. Cys-305 is a binding site for [4Fe-4S] cluster.

The protein belongs to the radical SAM superfamily. MoaA family. As to quaternary structure, monomer and homodimer. It depends on [4Fe-4S] cluster as a cofactor.

The catalysed reaction is GTP + AH2 + S-adenosyl-L-methionine = (8S)-3',8-cyclo-7,8-dihydroguanosine 5'-triphosphate + 5'-deoxyadenosine + L-methionine + A + H(+). The protein operates within cofactor biosynthesis; molybdopterin biosynthesis. Catalyzes the cyclization of GTP to (8S)-3',8-cyclo-7,8-dihydroguanosine 5'-triphosphate. The chain is GTP 3',8-cyclase from Mycolicibacterium smegmatis (strain ATCC 700084 / mc(2)155) (Mycobacterium smegmatis).